The chain runs to 408 residues: 3-phosphoshikimate 1-carboxyvinyltransferase (408 aa).

3-phosphoshikimate contacts are provided by Lys-20, Ser-21, and Arg-25. Lys-20 contacts phosphoenolpyruvate. Arg-111 contributes to the phosphoenolpyruvate binding site. Residues Ser-151, Ser-152, Gln-153, Ser-178, Asp-293, and Lys-320 each contribute to the 3-phosphoshikimate site. Gln-153 lines the phosphoenolpyruvate pocket. The active-site Proton acceptor is the Asp-293. Residues Arg-324, Arg-365, and Lys-389 each coordinate phosphoenolpyruvate.

This sequence belongs to the EPSP synthase family. In terms of assembly, monomer.

The protein localises to the cytoplasm. The enzyme catalyses 3-phosphoshikimate + phosphoenolpyruvate = 5-O-(1-carboxyvinyl)-3-phosphoshikimate + phosphate. It participates in metabolic intermediate biosynthesis; chorismate biosynthesis. Catalyzes the transfer of the enolpyruvyl moiety of phosphoenolpyruvate (PEP) to the 5-hydroxyl of shikimate-3-phosphate (S3P) to produce enolpyruvyl shikimate-3-phosphate and inorganic phosphate. In Sulfurisphaera tokodaii (strain DSM 16993 / JCM 10545 / NBRC 100140 / 7) (Sulfolobus tokodaii), this protein is 3-phosphoshikimate 1-carboxyvinyltransferase.